The primary structure comprises 534 residues: CTP synthase (534 aa).

Positions 1–267 (MTKYIFVTGG…DQIVCDHLKL (267 aa)) are amidoligase domain. S13 provides a ligand contact to CTP. S13 provides a ligand contact to UTP. An ATP-binding site is contributed by 14–19 (SIGKGI). Y54 serves as a coordination point for L-glutamine. Residue D71 coordinates ATP. D71 and E141 together coordinate Mg(2+). Residues 148–150 (DIE), 188–193 (KTKPTQ), and K224 each bind CTP. Residues 188–193 (KTKPTQ) and K224 each bind UTP. Residues 292-534 (KIALVGKYVE…FVTAAVENAK (243 aa)) enclose the Glutamine amidotransferase type-1 domain. G354 provides a ligand contact to L-glutamine. The Nucleophile; for glutamine hydrolysis role is filled by C381. Residues 382-385 (LGMQ), E405, and R463 each bind L-glutamine. Residues H508 and E510 contribute to the active site.

This sequence belongs to the CTP synthase family. As to quaternary structure, homotetramer.

It carries out the reaction UTP + L-glutamine + ATP + H2O = CTP + L-glutamate + ADP + phosphate + 2 H(+). It catalyses the reaction L-glutamine + H2O = L-glutamate + NH4(+). The enzyme catalyses UTP + NH4(+) + ATP = CTP + ADP + phosphate + 2 H(+). Its pathway is pyrimidine metabolism; CTP biosynthesis via de novo pathway; CTP from UDP: step 2/2. Allosterically activated by GTP, when glutamine is the substrate; GTP has no effect on the reaction when ammonia is the substrate. The allosteric effector GTP functions by stabilizing the protein conformation that binds the tetrahedral intermediate(s) formed during glutamine hydrolysis. Inhibited by the product CTP, via allosteric rather than competitive inhibition. Functionally, catalyzes the ATP-dependent amination of UTP to CTP with either L-glutamine or ammonia as the source of nitrogen. Regulates intracellular CTP levels through interactions with the four ribonucleotide triphosphates. In Streptococcus thermophilus (strain ATCC BAA-250 / LMG 18311), this protein is CTP synthase.